The chain runs to 404 residues: Cysteine desulfurase IscS (404 aa).

Residues 75-76 (AT), asparagine 155, glutamine 183, and 203-205 (SAH) each bind pyridoxal 5'-phosphate. Residue lysine 206 is modified to N6-(pyridoxal phosphate)lysine. Pyridoxal 5'-phosphate is bound at residue threonine 243. The Cysteine persulfide intermediate role is filled by cysteine 328. [2Fe-2S] cluster is bound at residue cysteine 328.

It belongs to the class-V pyridoxal-phosphate-dependent aminotransferase family. NifS/IscS subfamily. Homodimer. Forms a heterotetramer with IscU, interacts with other sulfur acceptors. Pyridoxal 5'-phosphate is required as a cofactor.

The protein localises to the cytoplasm. It carries out the reaction (sulfur carrier)-H + L-cysteine = (sulfur carrier)-SH + L-alanine. It participates in cofactor biosynthesis; iron-sulfur cluster biosynthesis. Its function is as follows. Master enzyme that delivers sulfur to a number of partners involved in Fe-S cluster assembly, tRNA modification or cofactor biosynthesis. Catalyzes the removal of elemental sulfur atoms from cysteine to produce alanine. Functions as a sulfur delivery protein for Fe-S cluster synthesis onto IscU, an Fe-S scaffold assembly protein, as well as other S acceptor proteins. In Shewanella piezotolerans (strain WP3 / JCM 13877), this protein is Cysteine desulfurase IscS.